A 321-amino-acid polypeptide reads, in one-letter code: ATP-dependent 6-phosphofructokinase (321 aa).

Gly-11 provides a ligand contact to ATP. Arg-21–Arg-25 provides a ligand contact to ADP. ATP contacts are provided by residues Arg-72–Cys-73 and Gly-102–Ser-105. Asp-103 contributes to the Mg(2+) binding site. Thr-126–Asp-128 is a binding site for substrate. Asp-128 functions as the Proton acceptor in the catalytic mechanism. Arg-155 lines the ADP pocket. Residues Arg-163 and Met-170 to Arg-172 contribute to the substrate site. Residues Gly-186–Glu-188, Arg-212, and Lys-214–His-216 each bind ADP. Substrate is bound by residues Glu-223, Arg-245, and His-251–Arg-254.

It belongs to the phosphofructokinase type A (PFKA) family. ATP-dependent PFK group I subfamily. Prokaryotic clade 'B1' sub-subfamily. As to quaternary structure, homotetramer. Requires Mg(2+) as cofactor.

Its subcellular location is the cytoplasm. The enzyme catalyses beta-D-fructose 6-phosphate + ATP = beta-D-fructose 1,6-bisphosphate + ADP + H(+). It participates in carbohydrate degradation; glycolysis; D-glyceraldehyde 3-phosphate and glycerone phosphate from D-glucose: step 3/4. With respect to regulation, allosterically activated by ADP and other diphosphonucleosides, and allosterically inhibited by phosphoenolpyruvate. Functionally, catalyzes the phosphorylation of D-fructose 6-phosphate to fructose 1,6-bisphosphate by ATP, the first committing step of glycolysis. The protein is ATP-dependent 6-phosphofructokinase of Caldanaerobacter subterraneus subsp. tengcongensis (strain DSM 15242 / JCM 11007 / NBRC 100824 / MB4) (Thermoanaerobacter tengcongensis).